The following is a 240-amino-acid chain: Ribonuclease 3 (240 aa).

The 133-residue stretch at 9-141 folds into the RNase III domain; the sequence is VEELQKRLGV…LLAALYLDQG (133 aa). Glu-54 provides a ligand contact to Mg(2+). Residue Asp-58 is part of the active site. Residues Asp-127 and Glu-130 each contribute to the Mg(2+) site. Glu-130 is a catalytic residue. One can recognise a DRBM domain in the interval 168–237; the sequence is DYKTALQEIV…ARKAYEKLVA (70 aa).

It belongs to the ribonuclease III family. Homodimer. Requires Mg(2+) as cofactor.

The protein localises to the cytoplasm. It catalyses the reaction Endonucleolytic cleavage to 5'-phosphomonoester.. Its function is as follows. Digests double-stranded RNA. Involved in the processing of primary rRNA transcript to yield the immediate precursors to the large and small rRNAs (23S and 16S). Processes some mRNAs, and tRNAs when they are encoded in the rRNA operon. Processes pre-crRNA and tracrRNA of type II CRISPR loci if present in the organism. This chain is Ribonuclease 3, found in Thermotoga neapolitana (strain ATCC 49049 / DSM 4359 / NBRC 107923 / NS-E).